The primary structure comprises 563 residues: MVYFRAHQPRHTPKTFPLEVHHSFSDKHPQIAKAMRITGIALAALSLLAVVACVIAVSAGGAAIPLAVISGIAVMSGLLSAATIICSAKKALAQRKQKQLEESLPLDNATEHVSYLTSDTSYFNQWESLGALNKQLSQIDLTIQAPEKKLLKEVLGSRYDSINHSIEEISDRFTKMLSLLRLREHFYRGEERYAPYLSPPLLNKNRLLTQITSNMIRMLPKSGGVFSLKANTLSHASRTLYTVLKVALSLGVLAGVAALIIFLPPSLPFIAVIGVSSLALGMASFLMIRGIKYLLEHSPLNRKQLAKDIQKTIGPDVLASMVHYQHQLLSHLHETLLDEAITARWSEPFFIEHANLKAKIEDLTKQYDILNAAFNKSLQQDEALRSQLEKRAYLFPIPNNDENAKTKESQLLDSENDSNSEFQEIINKGLEAANKRRADAKSKFYTEDETSDKIFSIWKPTKNLALEDLWRVHEACNEEQQALLLEDYMSYKTSECQAALQKVSQELKAAQKSFAVLEKHALDRSYESSVATMDLARANQETHRLLNILSELQQLAQYLLDNH.

Residues 1 to 36 (MVYFRAHQPRHTPKTFPLEVHHSFSDKHPQIAKAMR) are Cytoplasmic-facing. Residues 37–57 (ITGIALAALSLLAVVACVIAV) form a helical membrane-spanning segment. Residue Ser-58 is a topological domain, vacuolar. A helical membrane pass occupies residues 59 to 79 (AGGAAIPLAVISGIAVMSGLL). Topologically, residues 80 to 252 (SAATIICSAK…VLKVALSLGV (173 aa)) are cytoplasmic. The chain crosses the membrane as a helical span at residues 253-273 (LAGVAALIIFLPPSLPFIAVI). Residue Gly-274 is a topological domain, vacuolar. A helical transmembrane segment spans residues 275-295 (VSSLALGMASFLMIRGIKYLL). Over 296–563 (EHSPLNRKQL…QLAQYLLDNH (268 aa)) the chain is Cytoplasmic.

Belongs to the chlamydial CPn_0065/CT_288/TC_0561 family. As to quaternary structure, interacts with host CCDC146. In host cells infected with C.trachomatis incM, CCDC146 is recruited to the periphery of the pathogen-containing vacuole but recruitment is not dependent on incM.

The protein localises to the host vacuole. It is found in the host pathogen-containing vacuole. It localises to the host pathogen-containing vacuole membrane. The protein resides in the host pathogen-containing vacuole lumen. Its subcellular location is the secreted. Its function is as follows. Interferes with host cell cytokinesis, centrosome positioning and Golgi distribution, and contributes to the morphology and stability of the pathogen-containing vacuole. May exert its effects by acting directly or indirectly on host microtubules. This Chlamydia trachomatis serovar D (strain ATCC VR-885 / DSM 19411 / UW-3/Cx) protein is Inclusion membrane protein M.